Here is a 364-residue protein sequence, read N- to C-terminus: UDP-N-acetylglucosamine--N-acetylmuramyl-(pentapeptide) pyrophosphoryl-undecaprenol N-acetylglucosamine transferase (364 aa).

UDP-N-acetyl-alpha-D-glucosamine is bound by residues 10–12 (TGG), Asn-124, Ser-195, and Gln-295.

This sequence belongs to the glycosyltransferase 28 family. MurG subfamily.

The protein localises to the cell membrane. The catalysed reaction is di-trans,octa-cis-undecaprenyl diphospho-N-acetyl-alpha-D-muramoyl-L-alanyl-D-glutamyl-meso-2,6-diaminopimeloyl-D-alanyl-D-alanine + UDP-N-acetyl-alpha-D-glucosamine = di-trans,octa-cis-undecaprenyl diphospho-[N-acetyl-alpha-D-glucosaminyl-(1-&gt;4)]-N-acetyl-alpha-D-muramoyl-L-alanyl-D-glutamyl-meso-2,6-diaminopimeloyl-D-alanyl-D-alanine + UDP + H(+). The protein operates within cell wall biogenesis; peptidoglycan biosynthesis. Functionally, cell wall formation. Catalyzes the transfer of a GlcNAc subunit on undecaprenyl-pyrophosphoryl-MurNAc-pentapeptide (lipid intermediate I) to form undecaprenyl-pyrophosphoryl-MurNAc-(pentapeptide)GlcNAc (lipid intermediate II). In Bacillus pumilus (strain SAFR-032), this protein is UDP-N-acetylglucosamine--N-acetylmuramyl-(pentapeptide) pyrophosphoryl-undecaprenol N-acetylglucosamine transferase.